A 105-amino-acid polypeptide reads, in one-letter code: Heat shock protein HspQ (105 aa).

Residues 75-105 (SELQDEHPEQPSMDELAQTIRKQLQAPRLRN) are disordered.

This sequence belongs to the HspQ family.

The protein localises to the cytoplasm. Its function is as follows. Involved in the degradation of certain denaturated proteins, including DnaA, during heat shock stress. This Escherichia coli O127:H6 (strain E2348/69 / EPEC) protein is Heat shock protein HspQ.